A 300-amino-acid chain; its full sequence is MPSSFVSQLSPSLFSILREQLEKKGFTISIPPHTVFQGRSPTVSCTVYQSGKIVVQGKGTQEFVEFFLEPEILQTFSSQNVQQDLRSRIGVDESGKGDFFGPLCTAGVYASSPQAIEALYKTSICDSKLIPDAKILSLAQNIRSLCACKVITLFPEKYNALYANFQNLNSLLAWTHATIIDNLAPHPAGAVFAISDQFASSERVLLQAVRKKCSDIELIQRHRAEQDVVVAAASILAREAFLSSIHALESQYQIRLLKGASGKVKQRAKEILHNKGQVVLEKVCKTHFKTFNEVLGSGNQ.

The RNase H type-2 domain maps to 86–300 (RSRIGVDESG…FNEVLGSGNQ (215 aa)). Positions 92, 93, and 196 each coordinate a divalent metal cation.

Belongs to the RNase HII family. RnhC subfamily. Mn(2+) serves as cofactor. It depends on Mg(2+) as a cofactor.

It is found in the cytoplasm. It carries out the reaction Endonucleolytic cleavage to 5'-phosphomonoester.. Functionally, endonuclease that specifically degrades the RNA of RNA-DNA hybrids. The protein is Ribonuclease HIII of Chlamydia trachomatis serovar A (strain ATCC VR-571B / DSM 19440 / HAR-13).